A 201-amino-acid polypeptide reads, in one-letter code: Small ribosomal subunit protein uS4c (201 aa).

Residues 16–37 form a disordered region; that stretch reads GALPGLTSKRPRSGSDLRNQSR. The 64-residue stretch at 89–152 folds into the S4 RNA-binding domain; the sequence is MRLDNTLFRL…RSRTLIQNHI (64 aa).

The protein belongs to the universal ribosomal protein uS4 family. Part of the 30S ribosomal subunit. Contacts protein S5. The interaction surface between S4 and S5 is involved in control of translational fidelity.

The protein resides in the plastid. Its subcellular location is the chloroplast. Functionally, one of the primary rRNA binding proteins, it binds directly to 16S rRNA where it nucleates assembly of the body of the 30S subunit. Its function is as follows. With S5 and S12 plays an important role in translational accuracy. This is Small ribosomal subunit protein uS4c (rps4) from Chloranthus spicatus (Chulantree).